The sequence spans 98 residues: Putative defensin-like protein 233 (98 aa).

Positions 1–28 are cleaved as a signal peptide; that stretch reads MGMWCTTLFMVSCVSICLILSHVQEVEA. 4 cysteine pairs are disulfide-bonded: cysteine 35-cysteine 96, cysteine 45-cysteine 70, cysteine 53-cysteine 86, and cysteine 68-cysteine 88.

Belongs to the DEFL family. In terms of tissue distribution, expressed at least in stem, root, rosette leaves and flower buds.

The protein resides in the secreted. This is Putative defensin-like protein 233 (SCRL22) from Arabidopsis thaliana (Mouse-ear cress).